The chain runs to 60 residues: MSFMVSEEVTVKEGGPRMIVTGYSSGMVECRWYDGYGVKREAFHETELVPGEGSRSAEEV.

This is an uncharacterized protein from Escherichia coli O157:H7.